The sequence spans 1547 residues: Fatty acid synthase subunit alpha (1547 aa).

A disordered region spans residues 94–121 (TLPEAHPPPPIDSHQEPSTQTQATHRSA). Polar residues predominate over residues 109 to 118 (EPSTQTQATH). Residues 145-221 (LPVSTIVRSL…ETMSIGHNGR (77 aa)) enclose the Carrier domain. Ser180 is modified (O-(pantetheine 4'-phosphoryl)serine). Residues 563 to 798 (GKNVLITGAG…ATLMGGTITT (236 aa)) form a ketoreductase (KR) domain region. Positions 1004-1476 (KESLQEIVLQ…QKGSQAILIH (473 aa)) constitute a Ketosynthase family 3 (KS3) domain. Residues Cys1190 and His1442 each act as for beta-ketoacyl synthase activity in the active site.

Belongs to the thiolase-like superfamily. Fungal fatty acid synthetase subunit alpha family. It depends on pantetheine 4'-phosphate as a cofactor.

It carries out the reaction acetyl-CoA + n malonyl-CoA + 2n NADPH + 4n H(+) = a long-chain-acyl-CoA + n CoA + n CO2 + 2n NADP(+).. It catalyses the reaction a fatty acyl-[ACP] + malonyl-[ACP] + H(+) = a 3-oxoacyl-[ACP] + holo-[ACP] + CO2. The enzyme catalyses a (3R)-hydroxyacyl-[ACP] + NADP(+) = a 3-oxoacyl-[ACP] + NADPH + H(+). Its pathway is mycotoxin biosynthesis; HC-toxin biosynthesis. Functionally, fatty acid synthase alpha subunit, part of the diffuse TOX2 gene cluster that mediates the biosynthesis of the HC-toxin, cyclic tetrapeptide of structure cyclo(D-Pro-L-Ala-D-Ala-L-Aeo), where Aeo stands for 2-amino-9,10-epoxi-8-oxodecanoic acid. HC-toxin is a determinant of specificity and virulence in the interaction between the producing fungus and its host, maize. TOXH contribute to the synthesis of the decanoic backbone of 2-amino-9,10-epoxi-8-oxodecanoic acid, an essential precursor for the production of the major forms of HC-toxin by the non-ribosomal peptide synthetase HTS1. The polypeptide is Fatty acid synthase subunit alpha (Cochliobolus carbonum (Maize leaf spot fungus)).